The following is a 294-amino-acid chain: Potassium-transporting ATPase subunit beta (294 aa).

The Cytoplasmic portion of the chain corresponds to 1–36; it reads MAALQEKKSCSQRMAEFRQYCWNPDTGQMLGRTPAR. Residues 37–57 form a helical; Signal-anchor for type II membrane protein membrane-spanning segment; sequence WVWISLYYAAFYVVMTGLFAL. Topologically, residues 58–294 are extracellular; the sequence is CIYVLMQTID…KVEFKLTIQK (237 aa). N-linked (GlcNAc...) asparagine glycosylation is found at N99, N103, N130, N146, and N161. An intrachain disulfide couples C131 to C152. A disulfide bond links C162 and C178. Residues N193 and N225 are each glycosylated (N-linked (GlcNAc...) asparagine). The segment at 194–294 is immunoglobulin-like; the sequence is NTAPRVDCTF…KVEFKLTIQK (101 aa). C201 and C266 are oxidised to a cystine.

Belongs to the X(+)/potassium ATPases subunit beta family. As to quaternary structure, the ATPase pump is composed of two subunits: alpha (catalytic) and beta (regulatory). Interacts with alpha subunit ATP12A; this interaction is required for the formation of a functionally active pump and targeting at the plasma membrane. Interacts (via N-terminus) with alpha subunit ATP4A (via the P-domain). In terms of processing, N-glycosylation is necessary for assembly and functional expression of the pump at the plasma membrane. Stomach.

It is found in the apical cell membrane. It localises to the cell membrane. Its function is as follows. The beta subunit of the gastric H(+)/K(+) ATPase pump which transports H(+) ions in exchange for K(+) ions across the apical membrane of parietal cells. Plays a structural and regulatory role in the assembly and membrane targeting of a functionally active pump. Within a transport cycle, the transfer of a H(+) ion across the membrane is coupled to ATP hydrolysis and is associated with a transient phosphorylation of the alpha subunit that shifts the pump conformation from inward-facing (E1) to outward-facing state (E2). Interacts with the phosphorylation domain of the alpha subunit and functions as a ratchet, stabilizing the lumenal-open E2 conformation and preventing the reverse reaction of the transport cycle. The polypeptide is Potassium-transporting ATPase subunit beta (Atp4b) (Rattus norvegicus (Rat)).